Consider the following 224-residue polypeptide: MKATVKGRYEGDKATAAATLAFTPSAADLRFKASATDAAFARGPSLEGLTLTLEKPGSFLLDLKPHSKDVRFQFMNSALLLDRRVSLTYTHSTTLSPGPAKPPARTALDGSLTFDPANKLSLSHTLGSSGCRVKYSYAHGQDRLTTIEPCFDTANNAWDFAVTRKFQGGDAIKATYQASTKLLALDWTRDSKIGASFKVAASFDLSDQSKAPKLIAESTWNYEI.

Residue methionine 1 is a topological domain, cytoplasmic. Residues 2 to 11 (KATVKGRYEG) form a beta stranded membrane-spanning segment. At 12-16 (DKATA) the chain is on the chloroplast intermembrane side. A beta stranded transmembrane segment spans residues 17 to 28 (AATLAFTPSAAD). The Cytoplasmic portion of the chain corresponds to 29–32 (LRFK). Residues 33-42 (ASATDAAFAR) form a beta stranded membrane-spanning segment. The Chloroplast intermembrane segment spans residues 43–55 (GPSLEGLTLTLEK). Residues 56 to 64 (PGSFLLDLK) form a beta stranded membrane-spanning segment. Residues 65–70 (PHSKDV) lie on the Cytoplasmic side of the membrane. Residues 71–80 (RFQFMNSALL) traverse the membrane as a beta stranded segment. At 81–101 (LDRRVSLTYTHSTTLSPGPAK) the chain is on the chloroplast intermembrane side. A beta stranded transmembrane segment spans residues 102 to 111 (PPARTALDGS). The Cytoplasmic segment spans residues 112–116 (LTFDP). Residues 117-126 (ANKLSLSHTL) form a beta stranded membrane-spanning segment. Residues 127 to 130 (GSSG) lie on the Chloroplast intermembrane side of the membrane. The beta stranded transmembrane segment at 131–140 (CRVKYSYAHG) threads the bilayer. Over 141-154 (QDRLTTIEPCFDTA) the chain is Cytoplasmic. The beta stranded transmembrane segment at 155–166 (NNAWDFAVTRKF) threads the bilayer. Topologically, residues 167-169 (QGG) are chloroplast intermembrane. Residues 170–178 (DAIKATYQA) traverse the membrane as a beta stranded segment. Residues 179 to 180 (ST) lie on the Cytoplasmic side of the membrane. Residues 181-189 (KLLALDWTR) form a beta stranded membrane-spanning segment. Residues 190 to 212 (DSKIGASFKVAASFDLSDQSKAP) are Chloroplast intermembrane-facing. The chain crosses the membrane as a beta stranded span at residues 213-222 (KLIAESTWNY). Residues 223–224 (EI) are Cytoplasmic-facing.

Belongs to the plastid outer envelope porin OEP24 (TC 1.B.28.1) family. As to quaternary structure, homooligomers form large rather nonselective pores in plastidial outer membranes.

Its subcellular location is the plastid. It localises to the etioplast membrane. It is found in the chloroplast outer membrane. Functionally, high-conductance voltage-dependent solute channel with a slight selectivity for cations transporting triosephosphates, dicarboxylic acids, ATP, inorganic phosphate (Pi), sugars, and positively or negatively charged amino acids. The chain is Outer envelope pore protein 24, chloroplastic (OEP24) from Oryza sativa subsp. indica (Rice).